A 173-amino-acid chain; its full sequence is Pathogenesis-related protein 1A/1B (173 aa).

A signal peptide spans 1–20 (MSTSAVLFLLLAVFAAGASA).

The protein belongs to the thaumatin family.

This chain is Pathogenesis-related protein 1A/1B, found in Hordeum vulgare (Barley).